Here is a 303-residue protein sequence, read N- to C-terminus: Sulfotransferase 6B1 (303 aa).

A 3'-phosphoadenylyl sulfate-binding site is contributed by 65–70 (KCGSNW). Histidine 118 (proton acceptor) is an active-site residue. Residues arginine 140, serine 148, tyrosine 203, 237-242 (STFQAM), and 259-261 (RKG) contribute to the 3'-phosphoadenylyl sulfate site.

Belongs to the sulfotransferase 1 family.

The protein localises to the cytoplasm. Its subcellular location is the cytosol. It carries out the reaction thyroxine + 3'-phosphoadenylyl sulfate = thyroxine sulfate + adenosine 3',5'-bisphosphate + H(+). In terms of biological role, sulfotransferase that utilizes 3'-phospho-5'-adenylyl sulfate (PAPS) as sulfonate donor to catalyze the sulfate conjugation of thyroxine. Involved in the metabolism of thyroxine. This chain is Sulfotransferase 6B1 (SULT6B1), found in Gorilla gorilla gorilla (Western lowland gorilla).